A 585-amino-acid chain; its full sequence is Arginine--tRNA ligase (585 aa).

Positions 130-140 (ANPTGPMHVGH) match the 'HIGH' region motif.

The protein belongs to the class-I aminoacyl-tRNA synthetase family. As to quaternary structure, monomer.

Its subcellular location is the cytoplasm. The catalysed reaction is tRNA(Arg) + L-arginine + ATP = L-arginyl-tRNA(Arg) + AMP + diphosphate. This Methylorubrum extorquens (strain PA1) (Methylobacterium extorquens) protein is Arginine--tRNA ligase.